A 166-amino-acid polypeptide reads, in one-letter code: Short form salivary protein D7R5 (166 aa).

A signal peptide spans 1–22; sequence MEWRYFVVIALICPLIIVETLA. Disulfide bonds link Cys-26–Cys-58, Cys-39–Cys-166, and Cys-98–Cys-117.

The protein belongs to the PBP/GOBP family.

Its subcellular location is the secreted. In contrast to the related D7 salivary proteins, does not bind biogenic amines such as serotonin, noradrenaline, histamine and adrenaline. It is hypothesized that either D7r5 evolved an as yet unknown function or is becoming a pseudogene. The chain is Short form salivary protein D7R5 from Anopheles gambiae (African malaria mosquito).